The following is a 22-amino-acid chain: Pectinesterase (22 aa).

The active-site Proton donor is Asp-6. Residues Arg-19 and Trp-21 each coordinate substrate.

It belongs to the pectinesterase family.

It localises to the secreted. It is found in the cell wall. The enzyme catalyses [(1-&gt;4)-alpha-D-galacturonosyl methyl ester](n) + n H2O = [(1-&gt;4)-alpha-D-galacturonosyl](n) + n methanol + n H(+). It functions in the pathway glycan metabolism; pectin degradation; 2-dehydro-3-deoxy-D-gluconate from pectin: step 1/5. The polypeptide is Pectinesterase (Capsicum chinense (Scotch bonnet)).